We begin with the raw amino-acid sequence, 126 residues long: Prefoldin subunit beta (126 aa).

This sequence belongs to the prefoldin subunit beta family. Heterohexamer of two alpha and four beta subunits.

Its subcellular location is the cytoplasm. Functionally, molecular chaperone capable of stabilizing a range of proteins. Seems to fulfill an ATP-independent, HSP70-like function in archaeal de novo protein folding. The sequence is that of Prefoldin subunit beta from Pyrobaculum neutrophilum (strain DSM 2338 / JCM 9278 / NBRC 100436 / V24Sta) (Thermoproteus neutrophilus).